We begin with the raw amino-acid sequence, 245 residues long: 4-hydroxy-tetrahydrodipicolinate reductase (245 aa).

NAD(+)-binding positions include G7 to V12, G75 to T77, and A102 to F105. H132 (proton donor/acceptor) is an active-site residue. Position 133 (H133) interacts with (S)-2,3,4,5-tetrahydrodipicolinate. K136 acts as the Proton donor in catalysis. Position 142 to 143 (G142 to T143) interacts with (S)-2,3,4,5-tetrahydrodipicolinate.

It belongs to the DapB family.

It is found in the cytoplasm. The catalysed reaction is (S)-2,3,4,5-tetrahydrodipicolinate + NAD(+) + H2O = (2S,4S)-4-hydroxy-2,3,4,5-tetrahydrodipicolinate + NADH + H(+). It catalyses the reaction (S)-2,3,4,5-tetrahydrodipicolinate + NADP(+) + H2O = (2S,4S)-4-hydroxy-2,3,4,5-tetrahydrodipicolinate + NADPH + H(+). It functions in the pathway amino-acid biosynthesis; L-lysine biosynthesis via DAP pathway; (S)-tetrahydrodipicolinate from L-aspartate: step 4/4. In terms of biological role, catalyzes the conversion of 4-hydroxy-tetrahydrodipicolinate (HTPA) to tetrahydrodipicolinate. This Mycobacterium bovis (strain ATCC BAA-935 / AF2122/97) protein is 4-hydroxy-tetrahydrodipicolinate reductase.